The chain runs to 405 residues: MSITEANALADAPGTRNFTINFGPQHPAAHGVLRLVLELDGEVVERVDPHIGLLHRGTEKLIEQKTYLQAIPYFDRLDYVAPMNQEHAFCLAAEKLLGITVPRRGQLIRVLYSEIGRILSHLLNITTQALDVGALTPPLWGFEEREKLMMFYERASGSRMHAAFFRIGGVHQDLPPKLIGDIDIWCDAFPEKLDDLEILLTDNRIFKQRNVDIGVVTLDQAWEWGFSGVMVRGSGAAWDLRRAQPYECYDEMEFDIPIGKNGDCYDRYCIRVEEMRQSVRIMKQCIAKMRAPDGQGPVVIEDNKITPPRRGEMKRSMEALIHHFKLYTEGVHVPPGEVYAAVEAPKGEFGVYLVADGTNKPYKCKIRAPGFAHLQAMDFICKGHLLADVSAILGSLDIVFGEVDR.

It belongs to the complex I 49 kDa subunit family. In terms of assembly, NDH-1 is composed of 14 different subunits. Subunits NuoB, C, D, E, F, and G constitute the peripheral sector of the complex.

It localises to the cell inner membrane. The enzyme catalyses a quinone + NADH + 5 H(+)(in) = a quinol + NAD(+) + 4 H(+)(out). NDH-1 shuttles electrons from NADH, via FMN and iron-sulfur (Fe-S) centers, to quinones in the respiratory chain. The immediate electron acceptor for the enzyme in this species is believed to be ubiquinone. Couples the redox reaction to proton translocation (for every two electrons transferred, four hydrogen ions are translocated across the cytoplasmic membrane), and thus conserves the redox energy in a proton gradient. The chain is NADH-quinone oxidoreductase subunit D from Afipia carboxidovorans (strain ATCC 49405 / DSM 1227 / KCTC 32145 / OM5) (Oligotropha carboxidovorans).